The sequence spans 102 residues: MAGQAFRKFLPLFDRVLVERSAAETVTKGGIMLPEKSQGKVLQATVVAVGSGGKGKSGEIEPVSVKVGDKVLLPEYGGTKVVLDDKDYFLFRDSDILGKYVD.

A2 bears the N-acetylalanine mark. K8 carries the N6-acetyllysine modification. The residue at position 28 (K28) is an N6-succinyllysine. K40 is modified (N6-acetyllysine; alternate). 3 positions are modified to N6-malonyllysine; alternate: K40, K54, and K56. 3 positions are modified to N6-succinyllysine; alternate: K40, K54, and K56. An N6-acetyllysine; alternate modification is found at K56. S57 carries the post-translational modification Phosphoserine. N6-acetyllysine; alternate is present on residues K66 and K70. N6-succinyllysine; alternate is present on residues K66 and K70. At T79 the chain carries Phosphothreonine. N6-acetyllysine; alternate occurs at positions 80 and 86. K80 and K86 each carry N6-succinyllysine; alternate. K99 is modified (N6-acetyllysine).

Belongs to the GroES chaperonin family. Homoheptamer arranged in a ring structure. 2 heptameric Hsp10 rings interact with a Hsp60 tetradecamer in the structure of a back-to-back double heptameric ring to form the symmetrical football complex.

The protein localises to the mitochondrion matrix. Its function is as follows. Co-chaperonin implicated in mitochondrial protein import and macromolecular assembly. Together with Hsp60, facilitates the correct folding of imported proteins. May also prevent misfolding and promote the refolding and proper assembly of unfolded polypeptides generated under stress conditions in the mitochondrial matrix. The functional units of these chaperonins consist of heptameric rings of the large subunit Hsp60, which function as a back-to-back double ring. In a cyclic reaction, Hsp60 ring complexes bind one unfolded substrate protein per ring, followed by the binding of ATP and association with 2 heptameric rings of the co-chaperonin Hsp10. This leads to sequestration of the substrate protein in the inner cavity of Hsp60 where, for a certain period of time, it can fold undisturbed by other cell components. Synchronous hydrolysis of ATP in all Hsp60 subunits results in the dissociation of the chaperonin rings and the release of ADP and the folded substrate protein. In Mus musculus (Mouse), this protein is 10 kDa heat shock protein, mitochondrial (Hspe1).